The following is a 210-amino-acid chain: Frataxin, mitochondrial (210 aa).

The transit peptide at 1-41 directs the protein to the mitochondrion; the sequence is MWTLGRRAVAGLLASPSPAQAQTLTRVPRPAELAPLCGRRG.

This sequence belongs to the frataxin family. Component of the mitochondrial core iron-sulfur cluster (ISC) complex composed of NFS1, LYRM4, NDUFAB1, ISCU, FXN, and FDX2; this complex is a heterohexamer containing two copies of each monomer. Homodimer. Monomer (probable predominant form). Oligomer. Monomers and polymeric aggregates of &gt;1 MDa have been isolated from mitochondria. A small fraction of heterologous overexpressed recombinant frataxin forms high-molecular weight aggregates that incorporate iron. Interacts with LYRM4. Interacts (via ferrous form) with ISCU; the interaction is possible when both are bound to the dimeric form of the cysteine desulfurase complex (NFS1:LYRM4) and the interaction enhances FXN interaction to the dimeric form of the cysteine desulfurase complex (NFS1:LYRM4). Interacts with FECH; one iron-bound FXN monomer seems to interact with a FECH homodimer. Interacts with SDHA and SDHB. Interacts with ACO2; the interaction is dependent on citrate. Interacts with HSPA9. In terms of assembly, interacts with ACO1. Interacts with ISCU (cytoplasmic form). In terms of processing, processed in two steps by mitochondrial processing peptidase (MPP). MPP first cleaves the precursor to intermediate form and subsequently converts the intermediate to yield frataxin mature form (frataxin(81-210)) which is the predominant form. The additional forms, frataxin(56-210) and frataxin(78-210), seem to be produced when the normal maturation process is impaired; their physiological relevance is unsure. As to expression, expressed in the heart, peripheral blood lymphocytes and dermal fibroblasts.

It is found in the mitochondrion. The protein resides in the cytoplasm. It localises to the cytosol. It carries out the reaction 4 Fe(2+) + O2 + 4 H(+) = 4 Fe(3+) + 2 H2O. Functionally, functions as an activator of persulfide transfer to the scaffoding protein ISCU as component of the core iron-sulfur cluster (ISC) assembly complex and participates to the [2Fe-2S] cluster assembly. Accelerates sulfur transfer from NFS1 persulfide intermediate to ISCU and to small thiols such as L-cysteine and glutathione leading to persulfuration of these thiols and ultimately sulfide release. Binds ferrous ion and is released from FXN upon the addition of both L-cysteine and reduced FDX2 during [2Fe-2S] cluster assembly. The core iron-sulfur cluster (ISC) assembly complex is involved in the de novo synthesis of a [2Fe-2S] cluster, the first step of the mitochondrial iron-sulfur protein biogenesis. This process is initiated by the cysteine desulfurase complex (NFS1:LYRM4:NDUFAB1) that produces persulfide which is delivered on the scaffold protein ISCU in a FXN-dependent manner. Then this complex is stabilized by FDX2 which provides reducing equivalents to accomplish the [2Fe-2S] cluster assembly. Finally, the [2Fe-2S] cluster is transferred from ISCU to chaperone proteins, including HSCB, HSPA9 and GLRX5. May play a role in the protection against iron-catalyzed oxidative stress through its ability to catalyze the oxidation of Fe(2+) to Fe(3+); the oligomeric form but not the monomeric form has in vitro ferroxidase activity. May be able to store large amounts of iron in the form of a ferrihydrite mineral by oligomerization; however, the physiological relevance is unsure as reports are conflicting and the function has only been shown using heterologous overexpression systems. May function as an iron chaperone protein that protects the aconitase [4Fe-4S]2+ cluster from disassembly and promotes enzyme reactivation. May play a role as a high affinity iron binding partner for FECH that is capable of both delivering iron to ferrochelatase and mediating the terminal step in mitochondrial heme biosynthesis. Its function is as follows. Modulates the RNA-binding activity of ACO1. May be involved in the cytoplasmic iron-sulfur protein biogenesis. May contribute to oxidative stress resistance and overall cell survival. This Homo sapiens (Human) protein is Frataxin, mitochondrial.